Reading from the N-terminus, the 439-residue chain is UPF0597 protein Dalk_4447 (439 aa).

The protein belongs to the UPF0597 family.

The protein is UPF0597 protein Dalk_4447 of Desulfatibacillum aliphaticivorans.